An 827-amino-acid polypeptide reads, in one-letter code: Multiphosphoryl transfer protein (827 aa).

One can recognise a PTS EIIA type-2 domain in the interval 2-142 (IPLTSELVAI…AVIVARLTGA (141 aa)). Catalysis depends on H62, which acts as the Tele-phosphohistidine intermediate; for EIIA activity. A Phosphohistidine; by HPr modification is found at H62. The region spanning 157-245 (AQGIDVVVTG…AFEAGLEDEE (89 aa)) is the HPr domain. Catalysis depends on H171, which acts as the Pros-phosphohistidine intermediate; for HPr activity. Phosphohistidine; by EI is present on H171. Residues 270–827 (EGRTLVGISS…TTAAEVRGLK (558 aa)) are PTS EI. H457 functions as the Tele-phosphohistidine intermediate; for PTS EI activity in the catalytic mechanism. H457 bears the Phosphohistidine; by autocatalysis mark. Residues R564 and R600 each coordinate phosphoenolpyruvate. Mg(2+)-binding residues include E693 and D717. Phosphoenolpyruvate is bound by residues 716 to 717 (ND) and R727. C764 acts as the Proton donor in catalysis.

It belongs to the PEP-utilizing enzyme family. Mg(2+) serves as cofactor.

The protein localises to the cytoplasm. It catalyses the reaction L-histidyl-[protein] + phosphoenolpyruvate = N(pros)-phospho-L-histidyl-[protein] + pyruvate. Functionally, the phosphoenolpyruvate-dependent sugar phosphotransferase system (sugar PTS), a major carbohydrate active transport system, catalyzes the phosphorylation of incoming sugar substrates concomitantly with their translocation across the cell membrane. The enzyme II FruAB PTS system is involved in fructose transport. This Rhodobacter capsulatus (Rhodopseudomonas capsulata) protein is Multiphosphoryl transfer protein.